The chain runs to 337 residues: Phosphate acyltransferase (337 aa).

Belongs to the PlsX family. In terms of assembly, homodimer. Probably interacts with PlsY.

It is found in the cytoplasm. The catalysed reaction is a fatty acyl-[ACP] + phosphate = an acyl phosphate + holo-[ACP]. It participates in lipid metabolism; phospholipid metabolism. Its function is as follows. Catalyzes the reversible formation of acyl-phosphate (acyl-PO(4)) from acyl-[acyl-carrier-protein] (acyl-ACP). This enzyme utilizes acyl-ACP as fatty acyl donor, but not acyl-CoA. The sequence is that of Phosphate acyltransferase from Ehrlichia chaffeensis (strain ATCC CRL-10679 / Arkansas).